The chain runs to 88 residues: HssA/B-like protein 64 (88 aa).

Residues 1 to 24 (MTLFSSISSMSSSMTSSKSSFASF) show a composition bias toward low complexity. Disordered stretches follow at residues 1-25 (MTLF…ASFG) and 45-88 (GVSS…GNSC). Over residues 56-66 (AKSGGDCGGKG) the composition is skewed to gly residues.

The protein belongs to the hssA/B family.

In Dictyostelium discoideum (Social amoeba), this protein is HssA/B-like protein 64 (hssl64).